The chain runs to 117 residues: Large ribosomal subunit protein bL20c (117 aa).

It belongs to the bacterial ribosomal protein bL20 family.

It localises to the plastid. It is found in the chloroplast. In terms of biological role, binds directly to 23S ribosomal RNA and is necessary for the in vitro assembly process of the 50S ribosomal subunit. It is not involved in the protein synthesizing functions of that subunit. This is Large ribosomal subunit protein bL20c from Arabis hirsuta (Hairy rock-cress).